We begin with the raw amino-acid sequence, 192 residues long: Ion-translocating oxidoreductase complex subunit B (192 aa).

Positions 1–26 are hydrophobic; that stretch reads MNAIWIAVAAVSLLGLAFGAILGYAS. Residues 32–91 form the 4Fe-4S domain; that stretch reads EDDPVVEKIDEILPQSQCGQCGYPGCRPYAEAISCNGEKINRCAPGGEAVMLKIAELLNV. Positions 49, 52, 57, 74, 117, 120, 123, 127, 147, 150, 153, and 157 each coordinate [4Fe-4S] cluster. 4Fe-4S ferredoxin-type domains are found at residues 108-137 and 138-167; these read MVAV…GATR and AMHT…LQPV.

The protein belongs to the 4Fe4S bacterial-type ferredoxin family. RnfB subfamily. As to quaternary structure, the complex is composed of six subunits: RsxA, RsxB, RsxC, RsxD, RsxE and RsxG. It depends on [4Fe-4S] cluster as a cofactor.

It localises to the cell inner membrane. In terms of biological role, part of a membrane-bound complex that couples electron transfer with translocation of ions across the membrane. Required to maintain the reduced state of SoxR. In Shigella dysenteriae serotype 1 (strain Sd197), this protein is Ion-translocating oxidoreductase complex subunit B.